Reading from the N-terminus, the 323-residue chain is Thiamine-monophosphate kinase (323 aa).

Mg(2+) is bound by residues Asp30, Ser45, Thr46, and Asp47. Residue His54 participates in substrate binding. Asp75 and Asp122 together coordinate Mg(2+). Residues 121-122 (GD) and Arg146 contribute to the ATP site. Asp212 is a binding site for Mg(2+). Position 214 (Ser214) interacts with ATP. Residue Asp215 coordinates Mg(2+). Residues Glu263 and Phe319 each contribute to the substrate site.

This sequence belongs to the thiamine-monophosphate kinase family.

It carries out the reaction thiamine phosphate + ATP = thiamine diphosphate + ADP. It participates in cofactor biosynthesis; thiamine diphosphate biosynthesis; thiamine diphosphate from thiamine phosphate: step 1/1. Functionally, catalyzes the ATP-dependent phosphorylation of thiamine-monophosphate (TMP) to form thiamine-pyrophosphate (TPP), the active form of vitamin B1. The protein is Thiamine-monophosphate kinase of Buchnera aphidicola subsp. Schizaphis graminum (strain Sg).